Here is a 204-residue protein sequence, read N- to C-terminus: Large ribosomal subunit protein eL15z (204 aa).

The disordered stretch occupies residues 161–204 (LRGLTSEGKKNRGLRGKGHNNHKNRPSRRATWKKNNSLSLRRYR). The segment covering 171-192 (NRGLRGKGHNNHKNRPSRRATW) has biased composition (basic residues). Residues 193–204 (KKNNSLSLRRYR) show a composition bias toward polar residues.

It belongs to the eukaryotic ribosomal protein eL15 family.

This chain is Large ribosomal subunit protein eL15z (RPL15A), found in Arabidopsis thaliana (Mouse-ear cress).